We begin with the raw amino-acid sequence, 668 residues long: Probable serine/threonine-protein kinase abkB (668 aa).

2 disordered regions span residues 88–111 (YTNIGGTSPNRQSVPENSTTKTTA) and 132–162 (EVEEEIIDKNERGKEQEQENKQQKEQKDDNK). Polar residues predominate over residues 91–105 (IGGTSPNRQSVPENS). Residues 131–163 (KEVEEEIIDKNERGKEQEQENKQQKEQKDDNKS) adopt a coiled-coil conformation. Basic and acidic residues predominate over residues 138–162 (IDKNERGKEQEQENKQQKEQKDDNK). Residues 314-668 (DFERLPINSA…EIPSTYHHHH (355 aa)) enclose the Protein kinase domain. ATP is bound by residues 320-328 (INSASLAQV) and Lys346. The active-site Proton acceptor is the Asp478.

Belongs to the protein kinase superfamily. ADCK protein kinase family.

The protein is Probable serine/threonine-protein kinase abkB (abkB) of Dictyostelium discoideum (Social amoeba).